The chain runs to 465 residues: Trigger factor (465 aa).

In terms of domain architecture, PPIase FKBP-type spans 163 to 248; that stretch reads GDVINFNFKG…INKIKENQPA (86 aa). The segment at 431–465 is disordered; sequence EIVNKNQNDNEIEQDKEQKDNNEEKIKQENNLENK. The span at 443 to 465 shows a compositional bias: basic and acidic residues; it reads EQDKEQKDNNEEKIKQENNLENK.

Belongs to the FKBP-type PPIase family. Tig subfamily.

It is found in the cytoplasm. The catalysed reaction is [protein]-peptidylproline (omega=180) = [protein]-peptidylproline (omega=0). Its function is as follows. Involved in protein export. Acts as a chaperone by maintaining the newly synthesized protein in an open conformation. Functions as a peptidyl-prolyl cis-trans isomerase. The protein is Trigger factor of Mesomycoplasma hyopneumoniae (strain 232) (Mycoplasma hyopneumoniae).